Here is a 53-residue protein sequence, read N- to C-terminus: Large ribosomal subunit protein bL32c (53 aa).

The tract at residues 1–21 (MAVPKKRTSKSKKKSRRSHWI) is disordered.

This sequence belongs to the bacterial ribosomal protein bL32 family.

It is found in the plastid. It localises to the chloroplast. In Cyanidium caldarium (Red alga), this protein is Large ribosomal subunit protein bL32c (rpl32).